We begin with the raw amino-acid sequence, 1062 residues long: MPKRTDIHKIMVIGSGPIIIGQAAEFDYSGTQACLALRDEGYEVVLVNSNPATIMTDTTIADKVYIEPLTVDSVSRIIRQEYPDAILPTLGGQVGLNMALALAKTGILDELHIELLGTKLASIEQAEDREKFKELCQKLGEPVPPSKTVKTVEDALAFGDEIGYPIIVRPAFTMGGTGGGICHNHDELAEIAKNGLELSPVTECLIEKSIAGYKEIEFEVMRDSSDNAMIVCCMENFDPVGIHTGDSIVFSPSQTLSDKEYQMLRDCSLKLIRALKIEGGCNVQLALDPNSLDYDVIEVNPRVSRSSALASKATGYPIAKMAAKIAIGMTLDEIKNPVTGTTYAEFEPALDYVVCKIPRFPFDKFPKADRVLGTQMKATGEVMAIGRTAEEAMQKAVQSLEIDEKDLYSAKAHKASDDEIEQKLVRPQDDRLFYLAEAFRRGYSLEDVHELTKINFYFLDVVKHMVEMEKEIEANPDDLDVLRLAKKYGFSDQTIAKLWHEYPDQVRDLRKANGIVPVYKMVDTCAAEFESTTPYFYSTYDGENESRKSGKKSVIVIGSGPIRIGQGVEFDYATVHSVKALQKMGYEAIVINSNPETVSTDFSVSDKLYFEPLTLEDVLNVCDLEQPEGVIVQFGGQTSINLAAGLERHGVKILGTTVKDLDRAEDREEFDQIIKSLHLHQPQGLTATTHEGVMKAADQLGYPVLVRPSYVLGGKAMEIVYSKDELEEYLHDHADIAEDHPILVDDYLDGRECDVDAISDGKTVLLPGIMEHIEHAGVHSGDSMAVYPPQTFSDEVEEKITDVTKKLALALNCKGIMNIQFIVRDGDVYVIEVNPRASRTVPFLSKITGIEMAQVATRVIMGESLEQQGYADGLAPEPEMISVKAPVFSFSKLADVDSYLGPEMKSTGEVMGSDHTFAKALYKAFAGAKMQLPENGNVLLTIEDRDKEKILPIAKRFARIGYRIFATKGTANFLKKNDLHVELVTKVHEDEQADDNILNELRDGKIDLVINTMGHDIEKNSDGFIIRQMAIQQNVPLLTALDTADALLKSLENRSFATDALK.

The tract at residues 1 to 401 (MPKRTDIHKI…AMQKAVQSLE (401 aa)) is carboxyphosphate synthetic domain. Arginine 129, arginine 169, glycine 175, glycine 176, lysine 208, isoleucine 210, glutamate 215, glycine 241, isoleucine 242, histidine 243, glutamine 284, and glutamate 298 together coordinate ATP. The 195-residue stretch at 133-327 (KELCQKLGEP…IAKMAAKIAI (195 aa)) folds into the ATP-grasp 1 domain. Positions 284, 298, and 300 each coordinate Mg(2+). 3 residues coordinate Mn(2+): glutamine 284, glutamate 298, and asparagine 300. Positions 402 to 546 (IDEKDLYSAK…YSTYDGENES (145 aa)) are oligomerization domain. The interval 547 to 929 (RKSGKKSVIV…ALYKAFAGAK (383 aa)) is carbamoyl phosphate synthetic domain. Residues 671 to 861 (DQIIKSLHLH…MAQVATRVIM (191 aa)) form the ATP-grasp 2 domain. Residues arginine 707, aspartate 746, leucine 748, glutamate 752, glycine 777, valine 778, histidine 779, serine 780, glutamine 820, and glutamate 832 each coordinate ATP. Residues glutamine 820, glutamate 832, and asparagine 834 each contribute to the Mg(2+) site. Positions 820, 832, and 834 each coordinate Mn(2+). The region spanning 930 to 1062 (MQLPENGNVL…NRSFATDALK (133 aa)) is the MGS-like domain. Positions 930 to 1062 (MQLPENGNVL…NRSFATDALK (133 aa)) are allosteric domain.

This sequence belongs to the CarB family. In terms of assembly, composed of two chains; the small (or glutamine) chain promotes the hydrolysis of glutamine to ammonia, which is used by the large (or ammonia) chain to synthesize carbamoyl phosphate. Tetramer of heterodimers (alpha,beta)4. Requires Mg(2+) as cofactor. It depends on Mn(2+) as a cofactor.

The enzyme catalyses hydrogencarbonate + L-glutamine + 2 ATP + H2O = carbamoyl phosphate + L-glutamate + 2 ADP + phosphate + 2 H(+). The catalysed reaction is hydrogencarbonate + NH4(+) + 2 ATP = carbamoyl phosphate + 2 ADP + phosphate + 2 H(+). It functions in the pathway amino-acid biosynthesis; L-arginine biosynthesis; carbamoyl phosphate from bicarbonate: step 1/1. It participates in pyrimidine metabolism; UMP biosynthesis via de novo pathway; (S)-dihydroorotate from bicarbonate: step 1/3. Functionally, large subunit of the glutamine-dependent carbamoyl phosphate synthetase (CPSase). CPSase catalyzes the formation of carbamoyl phosphate from the ammonia moiety of glutamine, carbonate, and phosphate donated by ATP, constituting the first step of 2 biosynthetic pathways, one leading to arginine and/or urea and the other to pyrimidine nucleotides. The large subunit (synthetase) binds the substrates ammonia (free or transferred from glutamine from the small subunit), hydrogencarbonate and ATP and carries out an ATP-coupled ligase reaction, activating hydrogencarbonate by forming carboxy phosphate which reacts with ammonia to form carbamoyl phosphate. This Lactobacillus helveticus (strain DPC 4571) protein is Carbamoyl phosphate synthase large chain.